Reading from the N-terminus, the 197-residue chain is ATP-dependent Clp protease proteolytic subunit (197 aa).

The active-site Nucleophile is the Ser-101. The active site involves His-126.

The protein belongs to the peptidase S14 family. Component of the chloroplastic Clp protease core complex.

It localises to the plastid. The protein localises to the chloroplast stroma. The enzyme catalyses Hydrolysis of proteins to small peptides in the presence of ATP and magnesium. alpha-casein is the usual test substrate. In the absence of ATP, only oligopeptides shorter than five residues are hydrolyzed (such as succinyl-Leu-Tyr-|-NHMec, and Leu-Tyr-Leu-|-Tyr-Trp, in which cleavage of the -Tyr-|-Leu- and -Tyr-|-Trp bonds also occurs).. Its function is as follows. Cleaves peptides in various proteins in a process that requires ATP hydrolysis. Has a chymotrypsin-like activity. Plays a major role in the degradation of misfolded proteins. The polypeptide is ATP-dependent Clp protease proteolytic subunit (Daucus carota (Wild carrot)).